We begin with the raw amino-acid sequence, 86 residues long: Putative regulatory protein Dvul_2085 (86 aa).

It belongs to the RemA family.

This is Putative regulatory protein Dvul_2085 from Nitratidesulfovibrio vulgaris (strain DP4) (Desulfovibrio vulgaris).